Here is a 371-residue protein sequence, read N- to C-terminus: Maltose/maltodextrin import ATP-binding protein MalK (371 aa).

The ABC transporter domain occupies 4–234 (VQLQNVTKAW…PADRFVAGFI (231 aa)). 36–43 (GPSGCGKS) provides a ligand contact to ATP.

It belongs to the ABC transporter superfamily. Maltooligosaccharide importer (TC 3.A.1.1.1) family. The complex is composed of two ATP-binding proteins (MalK), two transmembrane proteins (MalG and MalK) and a solute-binding protein (MalE).

The protein resides in the cell inner membrane. The enzyme catalyses D-maltose(out) + ATP + H2O = D-maltose(in) + ADP + phosphate + H(+). Functionally, part of the ABC transporter complex MalEFGK involved in maltose/maltodextrin import. Responsible for energy coupling to the transport system. This is Maltose/maltodextrin import ATP-binding protein MalK from Escherichia coli O6:H1 (strain CFT073 / ATCC 700928 / UPEC).